A 208-amino-acid chain; its full sequence is MSYQEKNAMSPIIDALVPMVVEQTSRGERSYDIYSRLLKERVIFLTGQVEDHMANLVVAQLLFLESENPDKDIFLYINSPGGSVTAGMSIYDTMQFIKPNVSTVCMGQACSMGAFLLAGGAPGKRYVLPNSRVMIHQPLGGFQGQASDIQIHAQEILTIKQKLNNLLAEHTGQPLEVIERDTDRDNFMSADQAVEYGIVDAVLSHRGE.

Residue Ser-111 is the Nucleophile of the active site. His-136 is an active-site residue.

This sequence belongs to the peptidase S14 family. Fourteen ClpP subunits assemble into 2 heptameric rings which stack back to back to give a disk-like structure with a central cavity, resembling the structure of eukaryotic proteasomes.

The protein resides in the cytoplasm. It carries out the reaction Hydrolysis of proteins to small peptides in the presence of ATP and magnesium. alpha-casein is the usual test substrate. In the absence of ATP, only oligopeptides shorter than five residues are hydrolyzed (such as succinyl-Leu-Tyr-|-NHMec, and Leu-Tyr-Leu-|-Tyr-Trp, in which cleavage of the -Tyr-|-Leu- and -Tyr-|-Trp bonds also occurs).. In terms of biological role, cleaves peptides in various proteins in a process that requires ATP hydrolysis. Has a chymotrypsin-like activity. Plays a major role in the degradation of misfolded proteins. This is ATP-dependent Clp protease proteolytic subunit from Vibrio campbellii (strain ATCC BAA-1116).